We begin with the raw amino-acid sequence, 593 residues long: SPI-1 type 3 secretion system translocon protein SctE (593 aa).

2 coiled-coil regions span residues 151 to 208 and 287 to 314; these read DTAK…ATDA and EGRQAEMEKKSAEFQEETRKAEETNRIM. The next 2 membrane-spanning stretches (helical) occupy residues 330 to 350 and 409 to 429; these read VVAAVFTGGASLALAAVGLAV and IVGAIVAAIAMVAVIVVVAVV.

The protein belongs to the SctE/SipB/YopB family. In terms of assembly, the core secretion machinery of the T3SS is composed of approximately 20 different proteins, including cytoplasmic components, a base, an export apparatus and a needle. This subunit is involved in the formation of a pore, called the translocon, in host membrane.

It is found in the secreted. The protein resides in the host membrane. It localises to the host cell. Its function is as follows. Component of the type III secretion system 1 (SPI-1 T3SS), also called injectisome, which is used to inject bacterial effector proteins into eukaryotic host cells. SipB/SctE1 and SipC/SctB are inserted into the host membrane where they form a pore and allow the translocation of effector proteins into the cytosol of target cells. Functionally, induces macrophage apoptosis either by binding and activating the proapoptotic enzyme caspase-1 (caspase-1 dependent), resulting in the release of interleukin-1 beta active form, or by disrupting mitochondria and inducing autophagy (caspase-1 independent). The former is dependent of its membrane-fusion activity. This is SPI-1 type 3 secretion system translocon protein SctE from Salmonella typhi.